The chain runs to 318 residues: L-carnitine dehydrogenase (318 aa).

14–19 (GSGVIG) is an NAD(+) binding site.

It belongs to the 3-hydroxyacyl-CoA dehydrogenase family. L-carnitine dehydrogenase subfamily. As to quaternary structure, homodimer.

The protein resides in the cytoplasm. It catalyses the reaction carnitine + NAD(+) = 3-dehydrocarnitine + NADH + H(+). Its pathway is amine and polyamine metabolism; carnitine metabolism. Catalyzes the NAD(+)-dependent oxidation of L-carnitine to 3-dehydrocarnitine. The chain is L-carnitine dehydrogenase from Pseudomonas syringae pv. syringae (strain B728a).